The following is a 134-amino-acid chain: Holo-[acyl-carrier-protein] synthase (134 aa).

Positions 8 and 58 each coordinate Mg(2+).

This sequence belongs to the P-Pant transferase superfamily. AcpS family. It depends on Mg(2+) as a cofactor.

It is found in the cytoplasm. It carries out the reaction apo-[ACP] + CoA = holo-[ACP] + adenosine 3',5'-bisphosphate + H(+). Functionally, transfers the 4'-phosphopantetheine moiety from coenzyme A to a Ser of acyl-carrier-protein. The polypeptide is Holo-[acyl-carrier-protein] synthase (Acidiphilium cryptum (strain JF-5)).